The following is a 66-amino-acid chain: Large ribosomal subunit protein bL35 (66 aa).

It belongs to the bacterial ribosomal protein bL35 family.

In Hyphomonas neptunium (strain ATCC 15444), this protein is Large ribosomal subunit protein bL35.